Here is a 38-residue protein sequence, read N- to C-terminus: Photosystem II reaction center protein L (38 aa).

The chain crosses the membrane as a helical span at residues 17–37 (SLYWGLLLIXVLAVLFSNYFF).

This sequence belongs to the PsbL family. In terms of assembly, PSII is composed of 1 copy each of membrane proteins PsbA, PsbB, PsbC, PsbD, PsbE, PsbF, PsbH, PsbI, PsbJ, PsbK, PsbL, PsbM, PsbT, PsbX, PsbY, PsbZ, Psb30/Ycf12, at least 3 peripheral proteins of the oxygen-evolving complex and a large number of cofactors. It forms dimeric complexes.

The protein localises to the plastid. Its subcellular location is the chloroplast thylakoid membrane. One of the components of the core complex of photosystem II (PSII). PSII is a light-driven water:plastoquinone oxidoreductase that uses light energy to abstract electrons from H(2)O, generating O(2) and a proton gradient subsequently used for ATP formation. It consists of a core antenna complex that captures photons, and an electron transfer chain that converts photonic excitation into a charge separation. This subunit is found at the monomer-monomer interface and is required for correct PSII assembly and/or dimerization. The sequence is that of Photosystem II reaction center protein L from Allium textile (Textile onion).